A 286-amino-acid polypeptide reads, in one-letter code: uncharacterized protein (286 aa).

The next 7 helical transmembrane spans lie at 30–50 (LTFM…LTVQ), 68–88 (LSTI…VTAF), 99–119 (WFWA…GILL), 136–156 (IVYA…LSAL), 169–189 (LFHI…LSFI), 205–225 (IIPG…VYFV), and 254–274 (SALF…YFIL).

It localises to the cell membrane. This is an uncharacterized protein from Mycoplasma genitalium (strain ATCC 33530 / DSM 19775 / NCTC 10195 / G37) (Mycoplasmoides genitalium).